A 449-amino-acid polypeptide reads, in one-letter code: Adenylosuccinate synthetase isozyme 1 A (449 aa).

Residues 1–10 (MSHKSCYTNP) show a composition bias toward polar residues. Positions 1-22 (MSHKSCYTNPGTGGKRPRNDKG) are disordered. Residues 34–40 (GDEGKGK) and 62–64 (GHT) each bind GTP. The Proton acceptor role is filled by Asp35. The Mg(2+) site is built by Asp35 and Gly62. Asp35 is a substrate binding site. IMP is bound by residues 35-38 (DEGK), 60-63 (NAGH), Thr155, Arg169, Asn248, Thr263, and Arg327. His63 serves as the catalytic Proton donor. 323-329 (VTTGRKR) provides a ligand contact to substrate. Residues Arg329, 355–357 (KLD), and 437–440 (GVGK) each bind GTP.

This sequence belongs to the adenylosuccinate synthetase family. As to quaternary structure, homodimer. Mg(2+) is required as a cofactor.

It is found in the cytoplasm. It carries out the reaction IMP + L-aspartate + GTP = N(6)-(1,2-dicarboxyethyl)-AMP + GDP + phosphate + 2 H(+). Its pathway is purine metabolism; AMP biosynthesis via de novo pathway; AMP from IMP: step 1/2. In terms of biological role, component of the purine nucleotide cycle (PNC), which interconverts IMP and AMP to regulate the nucleotide levels in various tissues, and which contributes to glycolysis and ammoniagenesis. Catalyzes the first committed step in the biosynthesis of AMP from IMP. The polypeptide is Adenylosuccinate synthetase isozyme 1 A (adss1a) (Salmo salar (Atlantic salmon)).